Here is a 453-residue protein sequence, read N- to C-terminus: MAGESFPFTSSTLRALRLQREWLDWEDRRRAAAQQCRRHRDLPCPQAQLLRPRRSCRDPAVHNALFSGDLQQLQILFQDEDAANMIVETVSNQLAWSAEQGFWVLTPKTKQTAPLTIAVARGYTDCARHLILQGAELDARIGGRAALHEACAQAHPDCVRLLLTFGAKANVSSEEGMTPLHLCTSPESLQCAKLLLEAGASVNVASQESEVTPLHVAAARGLEQHVALYLQNGADVALRTSQGETALNAACAGAEGPGSSRQHEAAARQLLEAGADPQAAGRKRHTPLHNACANGCGGLAELLLRHGASPGVTNGAGHTPMDCALQAVQDAPNWEPEVLFAALLDYGAQPVHPEMLKHCANFPRALEVLLNAYPCVPSCDPWVEAVLPELWQEHEAFYSSALSMENQPRQLQHLARLAVRAQLGSHCRQAAAQLPLPPLLRDYLLLGVEGRIQ.

ANK repeat units follow at residues Cys56–Met85, Lys110–Ala139, Gly142–Val171, Glu175–Val204, Ser209–Leu238, Gln242–Ala279, and Lys283–Val312. Residues Phe397–Gln453 form the SOCS box domain.

It belongs to the ankyrin SOCS box (ASB) family.

The protein operates within protein modification; protein ubiquitination. In terms of biological role, may be a substrate-recognition component of a SCF-like ECS (Elongin-Cullin-SOCS-box protein) E3 ubiquitin-protein ligase complex which mediates the ubiquitination and subsequent proteasomal degradation of target proteins. The protein is Ankyrin repeat and SOCS box protein 16 (Asb16) of Mus musculus (Mouse).